We begin with the raw amino-acid sequence, 222 residues long: MKKAVVLLSGGLDSATCLAIARDQGYACHTIAFDYGQRTRSELDAAERVSGVLGALSHRVIELGMGNIGGSALTDHSIEVPENGGDGIPVTYVPARNTVFLSLALGLAEVIDAQAIFIGVNAVDYSGYPDCRPAFIEAFQSMATLATKAGVEGRPMQIETPLMHLSKAQIIQRGVALGLDYGLTVSCYQADDHGNACGKCDSCRLRSQGFEDALVKDPTNYQ.

8 to 18 is a binding site for ATP; that stretch reads LSGGLDSATCL. Zn(2+) contacts are provided by C187, C197, C200, and C203.

The protein belongs to the QueC family. It depends on Zn(2+) as a cofactor.

The enzyme catalyses 7-carboxy-7-deazaguanine + NH4(+) + ATP = 7-cyano-7-deazaguanine + ADP + phosphate + H2O + H(+). It functions in the pathway purine metabolism; 7-cyano-7-deazaguanine biosynthesis. Its function is as follows. Catalyzes the ATP-dependent conversion of 7-carboxy-7-deazaguanine (CDG) to 7-cyano-7-deazaguanine (preQ(0)). The protein is 7-cyano-7-deazaguanine synthase of Alcanivorax borkumensis (strain ATCC 700651 / DSM 11573 / NCIMB 13689 / SK2).